Reading from the N-terminus, the 438-residue chain is 23S rRNA (uracil(1939)-C(5))-methyltransferase RlmD (438 aa).

The TRAM domain occupies 4–68 (FYTPGRRTAT…RHFARGRVTR (65 aa)). [4Fe-4S] cluster is bound by residues Cys-81, Cys-87, Cys-90, and Cys-167. Gln-269, Phe-298, Asn-303, Glu-319, Asn-346, and Asp-367 together coordinate S-adenosyl-L-methionine. Cys-393 serves as the catalytic Nucleophile.

This sequence belongs to the class I-like SAM-binding methyltransferase superfamily. RNA M5U methyltransferase family. RlmD subfamily.

The enzyme catalyses uridine(1939) in 23S rRNA + S-adenosyl-L-methionine = 5-methyluridine(1939) in 23S rRNA + S-adenosyl-L-homocysteine + H(+). In terms of biological role, catalyzes the formation of 5-methyl-uridine at position 1939 (m5U1939) in 23S rRNA. This chain is 23S rRNA (uracil(1939)-C(5))-methyltransferase RlmD, found in Edwardsiella ictaluri (strain 93-146).